A 302-amino-acid polypeptide reads, in one-letter code: Protein FdhE homolog (302 aa).

It belongs to the FdhE family.

Its subcellular location is the cytoplasm. In terms of biological role, necessary for formate dehydrogenase activity. The sequence is that of Protein FdhE homolog from Haemophilus influenzae (strain PittEE).